A 42-amino-acid polypeptide reads, in one-letter code: Tachystatin-B1 (42 aa).

3 cysteine pairs are disulfide-bonded: C4-C20, C11-C25, and C19-C37.

As to expression, granular hemocytes, small secretory granules.

It is found in the secreted. In terms of biological role, exhibits stronger antimicrobial activity against the Gram-positive bacteria (S.aureus (IC(50) is 7.4 ug/ml)) and fungi (C.albicans (IC(50) is 3.0 ug/ml) and P.pastoris (IC(50) is 0.1 ug/ml)) than Gram-negative bacteria (E.coli no inhibition at 100 ug/ml). Binds to chitin (4.3 uM are required to obtain 50% of binding). Does not cause hemolysis on sheep erythrocytes. Has no blocking activity on the P-type calcium channel. This chain is Tachystatin-B1, found in Tachypleus tridentatus (Japanese horseshoe crab).